The primary structure comprises 509 residues: 2,3-bisphosphoglycerate-independent phosphoglycerate mutase (509 aa).

Mn(2+) is bound at residue D11. Y35 carries the post-translational modification Phosphotyrosine. S61 is a Mn(2+) binding site. S61 (phosphoserine intermediate) is an active-site residue. Residues H122, 152-153 (RD), R184, R190, 260-263 (RPDR), and K335 contribute to the substrate site. Residues D402, H406, D443, H444, and H461 each coordinate Mn(2+).

Belongs to the BPG-independent phosphoglycerate mutase family. Monomer. It depends on Mn(2+) as a cofactor.

It carries out the reaction (2R)-2-phosphoglycerate = (2R)-3-phosphoglycerate. It functions in the pathway carbohydrate degradation; glycolysis; pyruvate from D-glyceraldehyde 3-phosphate: step 3/5. Its function is as follows. Essential for rapid growth and for sporulation. Catalyzes the interconversion of 2-phosphoglycerate and 3-phosphoglycerate. In Bacillus cereus (strain ATCC 14579 / DSM 31 / CCUG 7414 / JCM 2152 / NBRC 15305 / NCIMB 9373 / NCTC 2599 / NRRL B-3711), this protein is 2,3-bisphosphoglycerate-independent phosphoglycerate mutase.